The sequence spans 496 residues: Protein TOO MANY MOUTHS (496 aa).

A signal peptide spans 1 to 23 (MARYEFFRQIFIVLSIVSPLVRS). At 24–473 (FTVITSDSTA…ATDVSSTSKS (450 aa)) the chain is on the extracellular side. 10 LRR repeats span residues 158 to 182 (GSSL…LGNL), 183 to 208 (TNLK…RFSG), 210 to 228 (RSLD…GFVL), 229 to 252 (PALS…LTSC), 254 to 276 (SLIK…INRL), 277 to 300 (NQLV…LQGL), 302 to 325 (SLQA…AFKG), 326 to 350 (LKNL…LTRL), 351 to 373 (NSLR…EFRD), and 375 to 401 (KHLS…VWRM). 2 N-linked (GlcNAc...) asparagine glycosylation sites follow: Asn181 and Asn196. The N-linked (GlcNAc...) asparagine glycan is linked to Asn362. The interval 438–464 (AETSRPAPSGTVQHLSREEDGALPDGA) is disordered. A helical transmembrane segment spans residues 474–494 (LGFSYLSAFFLVFPNFIFMLI). Over 495–496 (SS) the chain is Cytoplasmic.

This sequence belongs to the RLP family. In terms of assembly, forms heterodimer with ERECTA or ERL1 through their extracellular domains. Not able to form homodimer. Interacts with EPF2 but not with EPF1. Interacts with SERK1, SERK2, SERK3/BAK1 and SERK4. Interacts with EPFL9/STOMAGEN. In terms of tissue distribution, in epidermal cells of developing shoots and leaves, but not in roots. Expressed in the stomatal cell lineage in the developing epidermis. Accumulates strongly in meristemoid mother cells (MMC) and meristemoids, somewhat less in meristemoid sister cells (stomatal-lineage ground cells, SLGC), and is barely detected in pavement cells.

It localises to the cell membrane. Promotes cell fate progression in stomatal development. In leaves, needed to correctly orient spacing divisions, to limit the number of asymmetric divisions in neighbor cells, and to promote the asymmetric (amplifying) divisions of meristemoids. In stems, promotes the conversion of meristemoids into guard mother cells (GMC). Positively regulates CAPRICE (CPC) expression in differentiating stomaless-forming cell files. Forms constitutive complexes with ERECTA and ERL1 involved in the recognition of the stomatal regulatory peptides EPF1, EPF2 and EPFL9/STOMAGEN. Modulates the activity of the ligand-receptor pairs EPF2-ERECTA and EPF1-ERL1 in stomatal development. Functions in a combinatorial specific manner with the ERECTA-family (ERf) receptor kinases in the regulation of the immune response. The sequence is that of Protein TOO MANY MOUTHS from Arabidopsis thaliana (Mouse-ear cress).